The following is a 188-amino-acid chain: Elongation factor P (188 aa).

This sequence belongs to the elongation factor P family.

The protein localises to the cytoplasm. The protein operates within protein biosynthesis; polypeptide chain elongation. Involved in peptide bond synthesis. Stimulates efficient translation and peptide-bond synthesis on native or reconstituted 70S ribosomes in vitro. Probably functions indirectly by altering the affinity of the ribosome for aminoacyl-tRNA, thus increasing their reactivity as acceptors for peptidyl transferase. The polypeptide is Elongation factor P (Wolbachia pipientis subsp. Culex pipiens (strain wPip)).